We begin with the raw amino-acid sequence, 1521 residues long: Suppressor of Ty 6 homolog (1521 aa).

Residues 1 to 238 are disordered; sequence MDFIDNQAEE…EEIIEDDGEG (238 aa). A compositionally biased stretch (basic residues) spans 26 to 41; the sequence is KKMKMAKEKSKRKKKM. The Nuclear localization signal signature appears at 26-42; it reads KKMKMAKEKSKRKKKMV. Composition is skewed to acidic residues over residues 45-56 and 67-76; these read SDEDEDDDDDEE and ADDDDEEEDA. Residues 77 to 89 show a composition bias toward basic and acidic residues; it reads KSEKSEKSRHSGE. A compositionally biased stretch (acidic residues) spans 90 to 99; the sequence is DELDDEDLDL. The segment covering 126–157 has biased composition (basic and acidic residues); sequence PIRRPNHEDDDLLSERGSDDGDRRKDRGRGDR. Acidic residues-rich tracts occupy residues 166 to 176, 191 to 200, and 209 to 238; these read RSEDDFIEDDG, NLPEGAEDDA, and FNLD…DGEG. In terms of domain architecture, S1 motif spans 1183–1252; that stretch reads LGDSRQGGCP…ERFSLFLSCK (70 aa). Residues 1300–1389 enclose the SH2 domain; the sequence is HPNFHNVSYE…IARFVQPMIQ (90 aa).

Belongs to the SPT6 family. Interacts with glp-1 and lin-12. Abundant in embryos, and less abundant in larvae.

It localises to the nucleus. Histone H3-H4 chaperone that plays a role in maintenance of chromatin structure during RNA polymerase II transcription elongation. Required for several aspects of morphogenesis of C.elegans, including regulation of division in the germline and gut and specification of ventral-uterine precursor cell fate. This Caenorhabditis elegans protein is Suppressor of Ty 6 homolog (emb-5).